The chain runs to 383 residues: BRISC and BRCA1-A complex member 2 (383 aa).

UEV-like regions lie at residues 30–147 and 275–364; these read DATN…TLLE and IAAF…RAKA.

This sequence belongs to the BABAM2 family. In terms of assembly, component of the ARISC complex, at least composed of UIMC1/RAP80, ABRAXAS1, BRCC3/BRCC36, BABAM2 and BABAM1/NBA1. Component of the BRCA1-A complex, at least composed of BRCA1, BARD1, UIMC1/RAP80, ABRAXAS1, BRCC3/BRCC36, BABAM2 and BABAM1/NBA1. In the BRCA1-A complex, interacts directly with ABRAXAS1, BRCC3/BRCC36 and BABAM1/NBA1. Binds polyubiquitin. Component of the BRISC complex, at least composed of ABRAXAS2, BRCC3/BRCC36, BABAM2 and BABAM1/NBA1. Identified in a complex with SHMT2 and the other subunits of the BRISC complex. Component of the BRCA1/BRCA2 containing complex (BRCC), which also contains BRCA1, BRCA2, BARD1, BRCC3/BRCC36 and RAD51. BRCC is a ubiquitin E3 ligase complex that enhances cellular survival following DNA damage. May interact with FAS and TNFRSF1A.

The protein localises to the cytoplasm. The protein resides in the nucleus. Functionally, component of the BRCA1-A complex, a complex that specifically recognizes 'Lys-63'-linked ubiquitinated histones H2A and H2AX at DNA lesions sites, leading to target the BRCA1-BARD1 heterodimer to sites of DNA damage at double-strand breaks (DSBs). The BRCA1-A complex also possesses deubiquitinase activity that specifically removes 'Lys-63'-linked ubiquitin on histones H2A and H2AX. In the BRCA1-A complex, it acts as an adapter that bridges the interaction between BABAM1/NBA1 and the rest of the complex, thereby being required for the complex integrity and modulating the E3 ubiquitin ligase activity of the BRCA1-BARD1 heterodimer. Component of the BRISC complex, a multiprotein complex that specifically cleaves 'Lys-63'-linked ubiquitin in various substrates. Within the BRISC complex, acts as an adapter that bridges the interaction between BABAM1/NBA1 and the rest of the complex, thereby being required for the complex integrity. The BRISC complex is required for normal mitotic spindle assembly and microtubule attachment to kinetochores via its role in deubiquitinating NUMA1. The BRISC complex plays a role in interferon signaling via its role in the deubiquitination of the interferon receptor IFNAR1; deubiquitination increases IFNAR1 activity by enhancing its stability and cell surface expression. Down-regulates the response to bacterial lipopolysaccharide (LPS) via its role in IFNAR1 deubiquitination. May play a role in homeostasis or cellular differentiation in cells of neural, epithelial and germline origins. May also act as a death receptor-associated anti-apoptotic protein, which inhibits the mitochondrial apoptotic pathway. May regulate TNF-alpha signaling through its interactions with TNFRSF1A; however these effects may be indirect. This is BRISC and BRCA1-A complex member 2 (BABAM2) from Gallus gallus (Chicken).